The following is a 442-amino-acid chain: Histidine--tRNA ligase (442 aa).

The protein belongs to the class-II aminoacyl-tRNA synthetase family. As to quaternary structure, homodimer.

The protein resides in the cytoplasm. It catalyses the reaction tRNA(His) + L-histidine + ATP = L-histidyl-tRNA(His) + AMP + diphosphate + H(+). The chain is Histidine--tRNA ligase from Helicobacter pylori (strain HPAG1).